The chain runs to 164 residues: METVLKTLFVLLVATSLTLAKDLPQATRVLQTLSRGWGDNLEWVQTYEEGLYKAKTENKPLILINHRNDCPHSLALKKAFAEHQGIQKLAEEFVLLNVVYDPTDKNLQLDGQYVPKVVFVDPSLVVRADLPGKYSNHQYTYEPADIDLLFENMKKALILLKTEL.

Positions Met1 to Ala20 are cleaved as a signal peptide. Short sequence motifs (homodimer stabilization; interchain) lie at residues Ser34–Trp43 and Glu49–Thr56.

This sequence belongs to the AGR family. As to quaternary structure, monomer and homodimer.

The protein resides in the secreted. The protein localises to the endoplasmic reticulum. In Xenopus tropicalis (Western clawed frog), this protein is Anterior gradient protein 2.